Consider the following 365-residue polypeptide: WAT1-related protein At4g01440 (365 aa).

10 helical membrane passes run 8–28 (WTPVIIMVMINSALGLANALV), 40–60 (VIATYRLAISTLFLAPIAFFW), 72–92 (ILVQLFFSALVGASLTQYFFL), 101–121 (TLACAFISMTPAITFVMALIF), 132–152 (AGMGMVMGALICIGGALLLTM), 181–201 (WIIGCVLLFAGSSCFGSWMLI), 213–233 (YSSTVVLSFFGTIQCALLSLI), 249–269 (IVTIVYAGAVAQGICTVGTSW), 277–297 (IFTSIFTPVGLIFATLFDFLI), and 302–322 (IFLGSVVGSGVVIFGLYIFLL). 2 EamA domains span residues 25 to 144 (NALV…LICI) and 196 to 321 (GSWM…YIFL).

It belongs to the drug/metabolite transporter (DMT) superfamily. Plant drug/metabolite exporter (P-DME) (TC 2.A.7.4) family.

Its subcellular location is the membrane. This is WAT1-related protein At4g01440 from Arabidopsis thaliana (Mouse-ear cress).